The following is a 316-amino-acid chain: Pantothenate kinase (316 aa).

Position 95 to 102 (95 to 102 (GSVAVGKS)) interacts with ATP.

Belongs to the prokaryotic pantothenate kinase family.

It is found in the cytoplasm. The enzyme catalyses (R)-pantothenate + ATP = (R)-4'-phosphopantothenate + ADP + H(+). The protein operates within cofactor biosynthesis; coenzyme A biosynthesis; CoA from (R)-pantothenate: step 1/5. This chain is Pantothenate kinase, found in Sodalis glossinidius (strain morsitans).